A 165-amino-acid polypeptide reads, in one-letter code: MNLFCISLEGSMDSLYEPIPEQQANQENMSSRTDSPIPPFGESEQTPNNLFVGVSNLENAKPKKRKLFRRFMSENKIFEGKTVNDKIWQEHSKHKNDSHIRRPCQLKDLNENDFLSNNIHTYQGKTLQGTSYQVTSECWSPFHYQRHVETTVDELVRHFFPDVTI.

Residues 22 to 34 (QQANQENMSSRTD) are compositionally biased toward polar residues. The disordered stretch occupies residues 22 to 45 (QQANQENMSSRTDSPIPPFGESEQ).

This is an uncharacterized protein from Homo sapiens (Human).